The sequence spans 603 residues: F-box only protein 46 (603 aa).

Residues 18 to 54 (SKYSQNQPRPPSTALKPPVCPDTSSGTEPDHRPAHLE) form a disordered region. A phosphoserine mark is found at Ser21 and Ser67. 4 disordered regions span residues 113–165 (SRAS…SSGD), 235–301 (EAQR…TRAK), 332–359 (EASEGETPAPTRPEDTPPAPPPPPARDC), and 412–442 (QSRGPEGPPEPPPADIPSTVPGPDDSEGTTD). Thr347 carries the post-translational modification Phosphothreonine. Composition is skewed to pro residues over residues 347 to 356 (TPPAPPPPPA) and 417 to 426 (EGPPEPPPAD). The F-box domain occupies 470 to 522 (RQYMLLLPEHVLVKIFSFLPTRALAALKCTCHHFKGIIEAFGVRATDSRWSRD).

Part of a SCF (SKP1-cullin-F-box) protein ligase complex SCF(FBXO46) composed of CUL1, SKP1, RBX1 and FBXO46. Phosphorylated by ATM in response to DNA damage, promoting ubiquitination and degradation by the SCF(FBXO31) complex. In terms of processing, ATM-phosphorylated FBXO46 is ubiquitinated and degradaded by the SCF(FBXO31) complex in response to DNA damage.

It participates in protein modification; protein ubiquitination. Substrate-recognition component of the SCF(FBXO46) protein ligase complex, which mediates the ubiquitination and degradation of target proteins. In absence of stress, the SCF(FBXO46) complex catalyzes ubiquitination and degradation of MTOR-phosphorylated FBXO31. This Mus musculus (Mouse) protein is F-box only protein 46 (Fbxo46).